The following is a 468-amino-acid chain: Replication factor C large subunit (468 aa).

An ATP-binding site is contributed by 50–57 (GPPGSGKT). Residues 422–456 (EEKAVEEKVEEEEAEEEEEEERKEEEKPKAEKKKG) form a disordered region. Acidic residues predominate over residues 429 to 444 (KVEEEEAEEEEEEERK).

The protein belongs to the activator 1 small subunits family. RfcL subfamily. As to quaternary structure, heteromultimer composed of small subunits (RfcS) and large subunits (RfcL).

Part of the RFC clamp loader complex which loads the PCNA sliding clamp onto DNA. The protein is Replication factor C large subunit of Pyrococcus horikoshii (strain ATCC 700860 / DSM 12428 / JCM 9974 / NBRC 100139 / OT-3).